The following is an 808-amino-acid chain: DNA gyrase subunit B (808 aa).

The region spanning 429–544 (SELFIVEGDS…KGYLYIAQPP (116 aa)) is the Toprim domain. Mg(2+)-binding residues include Glu-435, Asp-509, and Asp-511.

This sequence belongs to the type II topoisomerase GyrB family. Heterotetramer, composed of two GyrA and two GyrB chains. In the heterotetramer, GyrA contains the active site tyrosine that forms a transient covalent intermediate with DNA, while GyrB binds cofactors and catalyzes ATP hydrolysis. Mg(2+) serves as cofactor. Mn(2+) is required as a cofactor. The cofactor is Ca(2+).

The protein resides in the cytoplasm. The catalysed reaction is ATP-dependent breakage, passage and rejoining of double-stranded DNA.. A type II topoisomerase that negatively supercoils closed circular double-stranded (ds) DNA in an ATP-dependent manner to modulate DNA topology and maintain chromosomes in an underwound state. Negative supercoiling favors strand separation, and DNA replication, transcription, recombination and repair, all of which involve strand separation. Also able to catalyze the interconversion of other topological isomers of dsDNA rings, including catenanes and knotted rings. Type II topoisomerases break and join 2 DNA strands simultaneously in an ATP-dependent manner. The polypeptide is DNA gyrase subunit B (Rickettsia bellii (strain RML369-C)).